A 717-amino-acid polypeptide reads, in one-letter code: Fatty acid oxidation complex subunit alpha (717 aa).

The segment at 1–190 (MIHAGNAITV…KDGAVDAVVA (190 aa)) is enoyl-CoA hydratase/isomerase. Residue aspartate 298 participates in substrate binding. The 3-hydroxyacyl-CoA dehydrogenase stretch occupies residues 313-717 (HPVNQAAVLG…MAANNKKFYG (405 aa)). NAD(+) contacts are provided by residues methionine 326, aspartate 345, 402 to 404 (VTE), lysine 409, and serine 431. Histidine 452 acts as the For 3-hydroxyacyl-CoA dehydrogenase activity in catalysis. Asparagine 455 lines the NAD(+) pocket. Position 502 (asparagine 502) interacts with substrate.

This sequence in the N-terminal section; belongs to the enoyl-CoA hydratase/isomerase family. The protein in the C-terminal section; belongs to the 3-hydroxyacyl-CoA dehydrogenase family. Heterotetramer of two alpha chains (FadB) and two beta chains (FadA).

The catalysed reaction is a (3S)-3-hydroxyacyl-CoA + NAD(+) = a 3-oxoacyl-CoA + NADH + H(+). It carries out the reaction a (3S)-3-hydroxyacyl-CoA = a (2E)-enoyl-CoA + H2O. The enzyme catalyses a 4-saturated-(3S)-3-hydroxyacyl-CoA = a (3E)-enoyl-CoA + H2O. It catalyses the reaction (3S)-3-hydroxybutanoyl-CoA = (3R)-3-hydroxybutanoyl-CoA. The catalysed reaction is a (3Z)-enoyl-CoA = a 4-saturated (2E)-enoyl-CoA. It carries out the reaction a (3E)-enoyl-CoA = a 4-saturated (2E)-enoyl-CoA. It participates in lipid metabolism; fatty acid beta-oxidation. Its function is as follows. Involved in the aerobic and anaerobic degradation of long-chain fatty acids via beta-oxidation cycle. Catalyzes the formation of 3-oxoacyl-CoA from enoyl-CoA via L-3-hydroxyacyl-CoA. It can also use D-3-hydroxyacyl-CoA and cis-3-enoyl-CoA as substrate. The protein is Fatty acid oxidation complex subunit alpha of Acinetobacter baumannii (strain AB307-0294).